The chain runs to 873 residues: MKSSEIRQKFLQFFQSKGHTIVPSASLVPGNDPTLLFTNSGMVQFKDVFTGKETRSYTRATSSQRSVRAGGKHNDLENVGYTARHHTFFEMLGNFSFGDYFKRDAIQYAWELLTQVYKLPAEKLWVTVYQEDDQAYDIWATEVGVPRERIIRIGDNKGSRYASDNFWQMADTGPCGPCSEIFYDHGPDVWGGPPGSPEEDGDRYIEIWNLVFMQFERDAAGNMTPLPKPCVDTGMGLERIAAVLQGVHSNYEIDLFQNLIRAAARETGVTNLEDNSLKVIADHIRACAFLIVDGVIPSNEGRGYVLRRIVRRALRHGYKLGQTKPFFYKLVPDLVAEMGQAYPELTQAAERVAQVLKQEEERFGETLEHGMKILDGALAGVPAGGQLDGTTLFTLYDTYGFPVDLTADICRERNVEVDMAGFDAAMARQRDQARAAGKFKMAEGLSYEGADTRFEGYEKLELDGVKVAALYVDGTQVERVQAGQHAVVVLDATPFYAESGGQVGDTGLLESGGARFAVADTLKIQAGVFGHHGVLESGSLAVGDTLLARVDAVRRARTVRNHSATHLMHKALRQVLGAHVQQRGSLVDPDKTRFDFAHDAPLSAEQIAQVEAIVNAEVLANQPTQARVMAYDDAVKGGAMALFGEKYGDTVRVLDIGFSRELCGGTHVSRTGDIGLFKIVAEGGVAAGVRRVEAITGDNALAWVQNQNALLLRAAGMLRTTPADLPERLAQVQEQLRTLEKDLEQARGKLAASAGNDLAAKAAEVKGVKVLAASLGDIDPKALRGMVDNLKDRLKSAVVLLASAGGDGKISLVGGVTADLTGRVKAGDLVGFVAGQVGGKGGGRPDMAMGGGNDAQALPAAVASVQGWVDERL.

Residues His562, His566, Cys663, and His667 each coordinate Zn(2+).

The protein belongs to the class-II aminoacyl-tRNA synthetase family. Zn(2+) serves as cofactor.

The protein localises to the cytoplasm. It catalyses the reaction tRNA(Ala) + L-alanine + ATP = L-alanyl-tRNA(Ala) + AMP + diphosphate. In terms of biological role, catalyzes the attachment of alanine to tRNA(Ala) in a two-step reaction: alanine is first activated by ATP to form Ala-AMP and then transferred to the acceptor end of tRNA(Ala). Also edits incorrectly charged Ser-tRNA(Ala) and Gly-tRNA(Ala) via its editing domain. In Bordetella petrii (strain ATCC BAA-461 / DSM 12804 / CCUG 43448), this protein is Alanine--tRNA ligase.